A 37-amino-acid chain; its full sequence is Cytochrome b6-f complex subunit 5 (37 aa).

A helical transmembrane segment spans residues 5 to 25 (LLSGIVLGLVPVTITGLFVAA).

Belongs to the PetG family. As to quaternary structure, the 4 large subunits of the cytochrome b6-f complex are cytochrome b6, subunit IV (17 kDa polypeptide, PetD), cytochrome f and the Rieske protein, while the 4 small subunits are PetG, PetL, PetM and PetN. The complex functions as a dimer.

The protein resides in the plastid. It is found in the chloroplast thylakoid membrane. In terms of biological role, component of the cytochrome b6-f complex, which mediates electron transfer between photosystem II (PSII) and photosystem I (PSI), cyclic electron flow around PSI, and state transitions. PetG is required for either the stability or assembly of the cytochrome b6-f complex. The chain is Cytochrome b6-f complex subunit 5 from Emiliania huxleyi (Coccolithophore).